Reading from the N-terminus, the 448-residue chain is Glutamyl-tRNA reductase (448 aa).

Substrate contacts are provided by residues 49–52, Ser109, 114–116, and Gln120; these read TCNR and ETQ. Residue Cys50 is the Nucleophile of the active site. 189–194 contacts NADP(+); it reads GAGEMG.

The protein belongs to the glutamyl-tRNA reductase family. As to quaternary structure, homodimer.

The enzyme catalyses (S)-4-amino-5-oxopentanoate + tRNA(Glu) + NADP(+) = L-glutamyl-tRNA(Glu) + NADPH + H(+). The protein operates within porphyrin-containing compound metabolism; protoporphyrin-IX biosynthesis; 5-aminolevulinate from L-glutamyl-tRNA(Glu): step 1/2. Its function is as follows. Catalyzes the NADPH-dependent reduction of glutamyl-tRNA(Glu) to glutamate 1-semialdehyde (GSA). The polypeptide is Glutamyl-tRNA reductase (Staphylococcus epidermidis (strain ATCC 12228 / FDA PCI 1200)).